Reading from the N-terminus, the 461-residue chain is Photosystem II CP43 reaction center protein (461 aa).

Residues 1-2 constitute a propeptide that is removed on maturation; it reads ME. Thr-3 bears the N-acetylthreonine mark. The residue at position 3 (Thr-3) is a Phosphothreonine. The next 5 helical transmembrane spans lie at 57–81, 122–143, 166–188, 243–263, and 279–300; these read LFEVAHFVPEKPMYEQGLILLPHLA, LIGPETLEESFPFFGYVWKDKS, KSVYFGGVYDTWAPGGGDVRKIT, KPFAWARRAFVWSGEAYLSYS, and WFNNTAYPSEFYGPTGPEASQA. Glu-355 serves as a coordination point for [CaMn4O5] cluster. The helical transmembrane segment at 435 to 459 threads the bilayer; the sequence is RARAAAAGFEKGIDRDTEPVLSMTP.

Belongs to the PsbB/PsbC family. PsbC subfamily. PSII is composed of 1 copy each of membrane proteins PsbA, PsbB, PsbC, PsbD, PsbE, PsbF, PsbH, PsbI, PsbJ, PsbK, PsbL, PsbM, PsbT, PsbX, PsbY, PsbZ, Psb30/Ycf12, at least 3 peripheral proteins of the oxygen-evolving complex and a large number of cofactors. It forms dimeric complexes. Binds multiple chlorophylls and provides some of the ligands for the Ca-4Mn-5O cluster of the oxygen-evolving complex. It may also provide a ligand for a Cl- that is required for oxygen evolution. PSII binds additional chlorophylls, carotenoids and specific lipids. is required as a cofactor.

It is found in the plastid. Its subcellular location is the chloroplast thylakoid membrane. Functionally, one of the components of the core complex of photosystem II (PSII). It binds chlorophyll and helps catalyze the primary light-induced photochemical processes of PSII. PSII is a light-driven water:plastoquinone oxidoreductase, using light energy to abstract electrons from H(2)O, generating O(2) and a proton gradient subsequently used for ATP formation. The polypeptide is Photosystem II CP43 reaction center protein (Psilotum nudum (Whisk fern)).